Consider the following 393-residue polypeptide: Carbamoyl phosphate synthase small chain (393 aa).

Residues 1-194 (MSKDTTTYQG…TYVIEAEGEE (194 aa)) form a CPSase region. L-glutamine contacts are provided by Ser-61, Gly-245, and Gly-247. Residues 195-390 (RHTVVAYDLG…VELMDADAQK (196 aa)) form the Glutamine amidotransferase type-1 domain. Cys-273 (nucleophile) is an active-site residue. Phe-274, Gln-277, Asn-315, Gly-317, and Phe-318 together coordinate L-glutamine. Residues His-363 and Glu-365 contribute to the active site.

Belongs to the CarA family. Composed of two chains; the small (or glutamine) chain promotes the hydrolysis of glutamine to ammonia, which is used by the large (or ammonia) chain to synthesize carbamoyl phosphate. Tetramer of heterodimers (alpha,beta)4.

It carries out the reaction hydrogencarbonate + L-glutamine + 2 ATP + H2O = carbamoyl phosphate + L-glutamate + 2 ADP + phosphate + 2 H(+). It catalyses the reaction L-glutamine + H2O = L-glutamate + NH4(+). It participates in amino-acid biosynthesis; L-arginine biosynthesis; carbamoyl phosphate from bicarbonate: step 1/1. It functions in the pathway pyrimidine metabolism; UMP biosynthesis via de novo pathway; (S)-dihydroorotate from bicarbonate: step 1/3. Small subunit of the glutamine-dependent carbamoyl phosphate synthetase (CPSase). CPSase catalyzes the formation of carbamoyl phosphate from the ammonia moiety of glutamine, carbonate, and phosphate donated by ATP, constituting the first step of 2 biosynthetic pathways, one leading to arginine and/or urea and the other to pyrimidine nucleotides. The small subunit (glutamine amidotransferase) binds and cleaves glutamine to supply the large subunit with the substrate ammonia. This Corynebacterium glutamicum (strain ATCC 13032 / DSM 20300 / JCM 1318 / BCRC 11384 / CCUG 27702 / LMG 3730 / NBRC 12168 / NCIMB 10025 / NRRL B-2784 / 534) protein is Carbamoyl phosphate synthase small chain.